Consider the following 431-residue polypeptide: V-type ATP synthase beta chain (431 aa).

The protein belongs to the ATPase alpha/beta chains family.

Its function is as follows. Produces ATP from ADP in the presence of a proton gradient across the membrane. The V-type beta chain is a regulatory subunit. The polypeptide is V-type ATP synthase beta chain (Treponema denticola (strain ATCC 35405 / DSM 14222 / CIP 103919 / JCM 8153 / KCTC 15104)).